The following is a 72-amino-acid chain: LITAF domain-containing protein (72 aa).

One can recognise an LITAF domain in the interval 1–71 (MPVQAVCPYC…CQRELFYYHR (71 aa)). The Zn(2+) site is built by cysteine 7 and cysteine 10. Positions 22 to 45 (PGALTWLLCTTLFLFGYVLGCCFL) are membrane-binding amphipathic helix. The Zn(2+) site is built by cysteine 59 and cysteine 62.

The protein belongs to the CDIP1/LITAF family.

It is found in the membrane. This chain is LITAF domain-containing protein, found in Homo sapiens (Human).